The following is a 176-amino-acid chain: NAD(P)H-quinone oxidoreductase subunit J (176 aa).

Polar residues-rich tracts occupy residues 1–12 and 20–30; these read MEKDSQATSSDT and ISQSLSKDGIP. The disordered stretch occupies residues 1 to 30; the sequence is MEKDSQATSSDTSIEKEGVISQSLSKDGIP.

The protein belongs to the complex I 30 kDa subunit family. In terms of assembly, NDH-1 can be composed of about 15 different subunits; different subcomplexes with different compositions have been identified which probably have different functions.

The protein localises to the cellular thylakoid membrane. The catalysed reaction is a plastoquinone + NADH + (n+1) H(+)(in) = a plastoquinol + NAD(+) + n H(+)(out). It carries out the reaction a plastoquinone + NADPH + (n+1) H(+)(in) = a plastoquinol + NADP(+) + n H(+)(out). Functionally, NDH-1 shuttles electrons from an unknown electron donor, via FMN and iron-sulfur (Fe-S) centers, to quinones in the respiratory and/or the photosynthetic chain. The immediate electron acceptor for the enzyme in this species is believed to be plastoquinone. Couples the redox reaction to proton translocation, and thus conserves the redox energy in a proton gradient. Cyanobacterial NDH-1 also plays a role in inorganic carbon-concentration. This chain is NAD(P)H-quinone oxidoreductase subunit J, found in Prochlorococcus marinus (strain AS9601).